A 298-amino-acid chain; its full sequence is Acetylglutamate kinase (298 aa).

Residues 68-69 (GG), Arg-90, and Asn-195 contribute to the substrate site.

This sequence belongs to the acetylglutamate kinase family. ArgB subfamily.

Its subcellular location is the cytoplasm. It carries out the reaction N-acetyl-L-glutamate + ATP = N-acetyl-L-glutamyl 5-phosphate + ADP. The protein operates within amino-acid biosynthesis; L-arginine biosynthesis; N(2)-acetyl-L-ornithine from L-glutamate: step 2/4. Functionally, catalyzes the ATP-dependent phosphorylation of N-acetyl-L-glutamate. The chain is Acetylglutamate kinase from Hydrogenovibrio crunogenus (strain DSM 25203 / XCL-2) (Thiomicrospira crunogena).